Here is a 330-residue protein sequence, read N- to C-terminus: Elongation factor Ts (330 aa).

Residues 79–82 (TDFV) form an involved in Mg(2+) ion dislocation from EF-Tu region.

The protein belongs to the EF-Ts family.

Its subcellular location is the cytoplasm. Its function is as follows. Associates with the EF-Tu.GDP complex and induces the exchange of GDP to GTP. It remains bound to the aminoacyl-tRNA.EF-Tu.GTP complex up to the GTP hydrolysis stage on the ribosome. The protein is Elongation factor Ts of Bacteroides fragilis (strain ATCC 25285 / DSM 2151 / CCUG 4856 / JCM 11019 / LMG 10263 / NCTC 9343 / Onslow / VPI 2553 / EN-2).